The primary structure comprises 59 residues: Large ribosomal subunit protein bL32 (59 aa).

The disordered stretch occupies residues 1-59; sequence MAVQQNKKSPSKRGMHRSHDFLTNPPLAVEPTSGEIHLRHHVSPNGYYRGRKVLPAKGE. Residues 49-59 are compositionally biased toward basic residues; the sequence is RGRKVLPAKGE.

It belongs to the bacterial ribosomal protein bL32 family.

The chain is Large ribosomal subunit protein bL32 from Methylobacillus flagellatus (strain ATCC 51484 / DSM 6875 / VKM B-1610 / KT).